The primary structure comprises 149 residues: Large ribosomal subunit protein uL13 (149 aa).

The protein belongs to the universal ribosomal protein uL13 family. As to quaternary structure, part of the 50S ribosomal subunit.

In terms of biological role, this protein is one of the early assembly proteins of the 50S ribosomal subunit, although it is not seen to bind rRNA by itself. It is important during the early stages of 50S assembly. The protein is Large ribosomal subunit protein uL13 of Bifidobacterium longum subsp. infantis (strain ATCC 15697 / DSM 20088 / JCM 1222 / NCTC 11817 / S12).